We begin with the raw amino-acid sequence, 65 residues long: Large ribosomal subunit protein bL35 (65 aa).

Belongs to the bacterial ribosomal protein bL35 family.

The sequence is that of Large ribosomal subunit protein bL35 from Prochlorococcus marinus (strain MIT 9215).